Consider the following 60-residue polypeptide: Cytotoxin sagitoxin (60 aa).

Intrachain disulfides connect Cys3-Cys21, Cys14-Cys38, Cys42-Cys53, and Cys54-Cys59.

Belongs to the three-finger toxin family. Short-chain subfamily. Type IA cytotoxin sub-subfamily. In terms of assembly, monomer in solution; Homodimer and oligomer (homohexamer) in the presence of negatively charged lipids forming a pore with a size ranging between 20 and 30 Angstroms. Expressed by the venom gland.

It is found in the secreted. The protein localises to the target cell membrane. Its function is as follows. Shows cytolytic activity on many different cells by forming pore in lipid membranes. In vivo, increases heart rate or kill the animal by cardiac arrest. In addition, it binds to heparin with high affinity, interacts with Kv channel-interacting protein 1 (KCNIP1) in a calcium-independent manner, and binds to integrin alpha-V/beta-3 (ITGAV/ITGB3) with moderate affinity. This chain is Cytotoxin sagitoxin, found in Naja sagittifera (Andaman cobra).